The sequence spans 446 residues: UDP-N-acetylmuramoylalanine--D-glutamate ligase (446 aa).

An ATP-binding site is contributed by 115 to 121; that stretch reads GTNGKTT.

This sequence belongs to the MurCDEF family.

Its subcellular location is the cytoplasm. The enzyme catalyses UDP-N-acetyl-alpha-D-muramoyl-L-alanine + D-glutamate + ATP = UDP-N-acetyl-alpha-D-muramoyl-L-alanyl-D-glutamate + ADP + phosphate + H(+). It participates in cell wall biogenesis; peptidoglycan biosynthesis. Functionally, cell wall formation. Catalyzes the addition of glutamate to the nucleotide precursor UDP-N-acetylmuramoyl-L-alanine (UMA). The sequence is that of UDP-N-acetylmuramoylalanine--D-glutamate ligase from Pelobacter propionicus (strain DSM 2379 / NBRC 103807 / OttBd1).